A 170-amino-acid chain; its full sequence is Small ribosomal subunit protein uS5 (170 aa).

The S5 DRBM domain maps to 11–74 (ILEKLVHINR…ETARRVLIHV (64 aa)).

It belongs to the universal ribosomal protein uS5 family. Part of the 30S ribosomal subunit. Contacts proteins S4 and S8.

In terms of biological role, with S4 and S12 plays an important role in translational accuracy. Located at the back of the 30S subunit body where it stabilizes the conformation of the head with respect to the body. This is Small ribosomal subunit protein uS5 from Pelagibacter ubique (strain HTCC1062).